Reading from the N-terminus, the 303-residue chain is Oxygen-dependent coproporphyrinogen-III oxidase (303 aa).

Ser93 contacts substrate. Residues His97 and His107 each contribute to the a divalent metal cation site. His107 functions as the Proton donor in the catalytic mechanism. 109 to 111 is a substrate binding site; sequence NIR. A divalent metal cation-binding residues include His146 and His176. The interval 241-276 is important for dimerization; that stretch reads YVEFNLLLDRGTLFGIQSNGRIESILSSMPPLVKWE.

Belongs to the aerobic coproporphyrinogen-III oxidase family. Homodimer. The cofactor is a divalent metal cation.

Its subcellular location is the cytoplasm. The catalysed reaction is coproporphyrinogen III + O2 + 2 H(+) = protoporphyrinogen IX + 2 CO2 + 2 H2O. The protein operates within porphyrin-containing compound metabolism; protoporphyrin-IX biosynthesis; protoporphyrinogen-IX from coproporphyrinogen-III (O2 route): step 1/1. Functionally, involved in the heme biosynthesis. Catalyzes the aerobic oxidative decarboxylation of propionate groups of rings A and B of coproporphyrinogen-III to yield the vinyl groups in protoporphyrinogen-IX. In Wigglesworthia glossinidia brevipalpis, this protein is Oxygen-dependent coproporphyrinogen-III oxidase.